The following is a 218-amino-acid chain: Large ribosomal subunit protein bL25 (218 aa).

The disordered stretch occupies residues 185 to 218 (ARAAEEEAPAAEETTAEPELVRERREPRAEEEEE). Over residues 190 to 200 (EEAPAAEETTA) the composition is skewed to acidic residues. Basic and acidic residues predominate over residues 203 to 212 (ELVRERREPR).

The protein belongs to the bacterial ribosomal protein bL25 family. CTC subfamily. Part of the 50S ribosomal subunit; part of the 5S rRNA/L5/L18/L25 subcomplex. Contacts the 5S rRNA. Binds to the 5S rRNA independently of L5 and L18.

This is one of the proteins that binds to the 5S RNA in the ribosome where it forms part of the central protuberance. In Roseiflexus castenholzii (strain DSM 13941 / HLO8), this protein is Large ribosomal subunit protein bL25.